A 187-amino-acid chain; its full sequence is uncharacterized protein (187 aa).

Residues 1–17 form the signal peptide; that stretch reads MYAGGRVVRSAFARGKV. C18 carries the N-palmitoyl cysteine lipid modification. C18 carries the S-diacylglycerol cysteine lipid modification.

It is found in the cell membrane. This is an uncharacterized protein from Treponema pallidum (strain Nichols).